The chain runs to 208 residues: Protein Nef (208 aa).

A lipid anchor (N-myristoyl glycine; by host) is attached at Gly2. Residue Ser6 is modified to Phosphoserine; by host. The disordered stretch occupies residues 16–51 (IRERMRRTPPTPPAAEGVGAVSQDLERRGAITSSNT). The interval 65-68 (EEDE) is acidic; interacts with host PACS1 and PACS2; stabilizes the interaction of NEF/MHC-I with host AP1M1; necessary for MHC-I internalization. Residues 72-81 (PVRPQVPLRP) form an SH3-binding; interaction with Src family tyrosine kinases region. Residues 75 to 78 (PQVP) carry the PxxP; stabilizes the interaction of NEF/MHC-I with host AP1M1; necessary for MHC-I internalization motif. The interval 111–127 (EILDLWVYHTQGYFPDW) is mediates dimerization, Nef-PTE1 interaction. The segment at 151–183 (VDPEEVEKANEGENNCLLHPMSQHGMEDEDKEV) is binding to ATP6V1H. Positions 167–168 (LL) match the Dileucine internalization motif; necessary for CD4 internalization motif. The Diacidic; necessary for CD4 internalization signature appears at 177–178 (ED).

This sequence belongs to the lentivirus primate group Nef protein family. Monomer; cytosolic form. Homodimer; membrane bound form. Interacts with Nef associated p21-activated kinase (PAK2); this interaction activates PAK2. Associates with the Nef-MHC-I-AP1 complex; this complex is required for MHC-I internalization. Interacts (via C-terminus) with host PI3-kinase. Interacts with host PACS1; this interaction seems to be weak. Interacts with host PACS2. Interacts with host LCK and MAPK3; these interactions inhibit the kinase activity of the latter. Interacts with host ATP6V1H; this interaction may play a role in CD4 endocytosis. Associates with the CD4-Nef-AP2 complex; this complex is required for CD4 internalization. Interacts with host AP2 subunit alpha and AP2 subunit sigma2. Interacts with TCR-zeta chain; this interaction up-regulates the Fas ligand (FasL) surface expression. Interacts with host HCK, LYN, and SRC; these interactions activate the Src family kinases. Interacts with MAP3K5; this interaction inhibits the Fas and TNFR-mediated death signals. Interacts with beta-COP and PTE1. Interacts with human RACK1; this increases Nef phosphorylation by PKC. Interacts with TP53; this interaction decreases the half-life of TP53, protecting the infected cell against p53-mediated apoptosis. The virion-associated Nef proteins are cleaved by the viral protease to release the soluble C-terminal core protein. Nef is probably cleaved concomitantly with viral structural proteins on maturation of virus particles. In terms of processing, myristoylated. Post-translationally, phosphorylated on serine residues, probably by host PKCdelta and theta.

The protein resides in the host cell membrane. It is found in the virion. It localises to the secreted. The protein localises to the host Golgi apparatus membrane. Its function is as follows. Factor of infectivity and pathogenicity, required for optimal virus replication. Alters numerous pathways of T-lymphocyte function and down-regulates immunity surface molecules in order to evade host defense and increase viral infectivity. Alters the functionality of other immunity cells, like dendritic cells, monocytes/macrophages and NK cells. In infected CD4(+) T-lymphocytes, down-regulates the surface MHC-I, mature MHC-II, CD4, CD28, CCR5 and CXCR4 molecules. Mediates internalization and degradation of host CD4 through the interaction of with the cytoplasmic tail of CD4, the recruitment of AP-2 (clathrin adapter protein complex 2), internalization through clathrin coated pits, and subsequent transport to endosomes and lysosomes for degradation. Diverts host MHC-I molecules to the trans-Golgi network-associated endosomal compartments by an endocytic pathway to finally target them for degradation. MHC-I down-regulation may involve AP-1 (clathrin adapter protein complex 1) or possibly Src family kinase-ZAP70/Syk-PI3K cascade recruited by PACS2. In consequence infected cells are masked for immune recognition by cytotoxic T-lymphocytes. Decreasing the number of immune receptors also prevents reinfection by more HIV particles (superinfection). Down-regulates host SERINC3 and SERINC5 thereby excluding these proteins from the viral particles. Virion infectivity is drastically higher when SERINC3 or SERINC5 are excluded from the viral envelope, because these host antiviral proteins impair the membrane fusion event necessary for subsequent virion penetration. Functionally, bypasses host T-cell signaling by inducing a transcriptional program nearly identical to that of anti-CD3 cell activation. Interaction with TCR-zeta chain up-regulates the Fas ligand (FasL). Increasing surface FasL molecules and decreasing surface MHC-I molecules on infected CD4(+) cells send attacking cytotoxic CD8+ T-lymphocytes into apoptosis. In terms of biological role, plays a role in optimizing the host cell environment for viral replication without causing cell death by apoptosis. Protects the infected cells from apoptosis in order to keep them alive until the next virus generation is ready to strike. Inhibits the Fas and TNFR-mediated death signals by blocking MAP3K5/ASK1. Decreases the half-life of TP53, protecting the infected cell against p53-mediated apoptosis. Inhibits the apoptotic signals regulated by the Bcl-2 family proteins through the formation of a Nef/PI3-kinase/PAK2 complex that leads to activation of PAK2 and induces phosphorylation of host BAD. Its function is as follows. Extracellular Nef protein targets CD4(+) T-lymphocytes for apoptosis by interacting with CXCR4 surface receptors. This is Protein Nef from Human immunodeficiency virus type 1 group M subtype F1 (isolate 93BR020) (HIV-1).